Consider the following 414-residue polypeptide: Sarcosine oxidase subunit beta (414 aa).

FAD-binding residues include Gly42, His43, Glu64, Asn72, Thr77, and Ile79. At His183 the chain carries Tele-8alpha-FMN histidine. FAD contacts are provided by Val207, Gly364, Gly367, and Lys369.

The protein belongs to the SoxB family. Heterotetramer composed of subunits alpha (SoxA), beta (SoxB), gamma (SoxG) and delta (SoxD). FAD is required as a cofactor. It depends on FMN as a cofactor.

The protein resides in the cytoplasm. It carries out the reaction sarcosine + (6S)-5,6,7,8-tetrahydrofolate + O2 = (6R)-5,10-methylene-5,6,7,8-tetrahydrofolate + glycine + H2O2. It catalyses the reaction sarcosine + O2 + H2O = formaldehyde + glycine + H2O2. In terms of biological role, in the presence of tetrahydrofolate, catalyzes the oxidative demethylation of sarcosine to yield glycine, 5,10-methylenetetrahydrofolate and hydrogen peroxide. In the absence of tetrahydrofolate, catalyzes the oxidative demethylation of sarcosine to yield glycine, formaldehyde and hydrogen peroxide. The sequence is that of Sarcosine oxidase subunit beta (soxB) from Rhodobacter capsulatus (strain ATCC BAA-309 / NBRC 16581 / SB1003).